The sequence spans 87 residues: UPF0213 protein SSA_0709 (87 aa).

Positions 3-78 (NKAYMYVLEC…KKKTRQAKLA (76 aa)) constitute a GIY-YIG domain.

This sequence belongs to the UPF0213 family.

The sequence is that of UPF0213 protein SSA_0709 from Streptococcus sanguinis (strain SK36).